A 413-amino-acid polypeptide reads, in one-letter code: Probable protein S-acyltransferase 3 (413 aa).

2 helical membrane-spanning segments follow: residues 65–85 (LTSF…LVWI) and 96–116 (VLAS…LTSA). The DHHC domain maps to 171-221 (KFCDTCLLYRPPRASHCSICNNCVQRFDHHCPWVGQCIARRNYPFFICFIS). The active-site S-palmitoyl cysteine intermediate is cysteine 201. The next 2 helical transmembrane spans lie at 216–236 (FICF…FSWI) and 255–275 (SVIL…LTIF). Residues 364-413 (RDSPRKLPLPTRNLDDIKDISDNYDRSTTTREDASDRDPSFFSSQLDLPK) are disordered. Over residues 376-402 (NLDDIKDISDNYDRSTTTREDASDRDP) the composition is skewed to basic and acidic residues. Residues 404-413 (FFSSQLDLPK) are compositionally biased toward polar residues.

The protein belongs to the DHHC palmitoyltransferase family. As to expression, expressed in flowers and pollen.

The protein localises to the endoplasmic reticulum membrane. The protein resides in the cytoplasmic vesicle membrane. It catalyses the reaction L-cysteinyl-[protein] + hexadecanoyl-CoA = S-hexadecanoyl-L-cysteinyl-[protein] + CoA. Palmitoyl acyltransferase. This Arabidopsis thaliana (Mouse-ear cress) protein is Probable protein S-acyltransferase 3 (PAT03).